A 670-amino-acid chain; its full sequence is DNA ligase (670 aa).

NAD(+)-binding positions include 34–38 (DFEFD), 83–84 (SL), and glutamate 113. Lysine 115 (N6-AMP-lysine intermediate) is an active-site residue. Arginine 136, glutamate 173, lysine 288, and lysine 312 together coordinate NAD(+). Residues cysteine 406, cysteine 409, cysteine 424, and cysteine 430 each contribute to the Zn(2+) site. Positions 591-670 (PESDKFAGKS…EAEFISLLNS (80 aa)) constitute a BRCT domain.

The protein belongs to the NAD-dependent DNA ligase family. LigA subfamily. Mg(2+) is required as a cofactor. Mn(2+) serves as cofactor.

The enzyme catalyses NAD(+) + (deoxyribonucleotide)n-3'-hydroxyl + 5'-phospho-(deoxyribonucleotide)m = (deoxyribonucleotide)n+m + AMP + beta-nicotinamide D-nucleotide.. Its function is as follows. DNA ligase that catalyzes the formation of phosphodiester linkages between 5'-phosphoryl and 3'-hydroxyl groups in double-stranded DNA using NAD as a coenzyme and as the energy source for the reaction. It is essential for DNA replication and repair of damaged DNA. The sequence is that of DNA ligase from Cytophaga hutchinsonii (strain ATCC 33406 / DSM 1761 / CIP 103989 / NBRC 15051 / NCIMB 9469 / D465).